The primary structure comprises 820 residues: Leucine--tRNA ligase (820 aa).

The 'HIGH' region motif lies at 40 to 51 (PYPSGAGLHVGH). The 'KMSKS' region motif lies at 601 to 605 (KMSKS). K604 is a binding site for ATP.

This sequence belongs to the class-I aminoacyl-tRNA synthetase family.

The protein localises to the cytoplasm. The enzyme catalyses tRNA(Leu) + L-leucine + ATP = L-leucyl-tRNA(Leu) + AMP + diphosphate. This chain is Leucine--tRNA ligase, found in Chlamydia abortus (strain DSM 27085 / S26/3) (Chlamydophila abortus).